Consider the following 181-residue polypeptide: Dual-action ribosomal maturation protein DarP (181 aa).

It belongs to the DarP family.

Its subcellular location is the cytoplasm. Functionally, member of a network of 50S ribosomal subunit biogenesis factors which assembles along the 30S-50S interface, preventing incorrect 23S rRNA structures from forming. Promotes peptidyl transferase center (PTC) maturation. The polypeptide is Dual-action ribosomal maturation protein DarP (Actinobacillus succinogenes (strain ATCC 55618 / DSM 22257 / CCUG 43843 / 130Z)).